The sequence spans 523 residues: Jerky protein homolog-like (523 aa).

One can recognise an HTH psq-type domain in the interval Met-1–Ile-52. 2 DNA-binding regions (H-T-H motif) span residues Ser-28–Asn-48 and Pro-100–Arg-132. In terms of domain architecture, HTH CENPB-type spans Lys-67–Asn-139. Residues Leu-168–Trp-385 enclose the DDE-1 domain.

Belongs to the tigger transposable element derived protein family.

It localises to the nucleus. This chain is Jerky protein homolog-like (Jrkl), found in Mus musculus (Mouse).